Here is a 66-residue protein sequence, read N- to C-terminus: Large ribosomal subunit protein uL29 (66 aa).

Belongs to the universal ribosomal protein uL29 family.

The chain is Large ribosomal subunit protein uL29 from Thermotoga neapolitana (strain ATCC 49049 / DSM 4359 / NBRC 107923 / NS-E).